We begin with the raw amino-acid sequence, 234 residues long: Large ribosomal subunit protein uL1 (234 aa).

This sequence belongs to the universal ribosomal protein uL1 family. As to quaternary structure, part of the 50S ribosomal subunit.

Its function is as follows. Binds directly to 23S rRNA. The L1 stalk is quite mobile in the ribosome, and is involved in E site tRNA release. Protein L1 is also a translational repressor protein, it controls the translation of the L11 operon by binding to its mRNA. The protein is Large ribosomal subunit protein uL1 of Sodalis glossinidius (strain morsitans).